A 989-amino-acid polypeptide reads, in one-letter code: Atos homolog protein A (989 aa).

The interval 24–32 (TLLITEGRT) is transactivation domain 1 (TAD1). Disordered stretches follow at residues 244-295 (GEGG…LPPG), 393-477 (PDAL…KPAT), 525-639 (QNEQ…GLTQ), and 656-686 (EAEK…TPAN). Low complexity predominate over residues 254–270 (RSSLRLPRSPLFSRSLH). Over residues 397–412 (FTSQEPPGHKTTWNST) the composition is skewed to polar residues. Composition is skewed to basic and acidic residues over residues 413–423 (QDKECLKKSKD) and 460–471 (TRLDRVDRESKT). 2 stretches are compositionally biased toward polar residues: residues 525-544 (QNEQ…VSLS) and 600-638 (TKSQ…NGLT). Positions 656–675 (EAEKHVRDGSTCLEKDENQE) are enriched in basic and acidic residues. A compositionally biased stretch (polar residues) spans 676–686 (PHSSLSSTPAN). Positions 792–849 (LLGNFEECVLNYRLEPLGTVEGFTAEVGASGTFCPSHMTLPVDVSFYSVSDDNAPSPY) are required for macropage invasion. The segment at 876–884 (FNPNKTVVK) is transactivation domain 2 (TAD2).

This sequence belongs to the ATOS family.

It localises to the nucleus. In terms of biological role, transcription regulator that syncronizes transcriptional and translational programs to promote macrophage invasion of tissues. The protein is Atos homolog protein A (atosa) of Danio rerio (Zebrafish).